The sequence spans 93 residues: Large ribosomal subunit protein uL23 (93 aa).

This sequence belongs to the universal ribosomal protein uL23 family. In terms of assembly, part of the 50S ribosomal subunit. Contacts protein L29, and trigger factor when it is bound to the ribosome.

One of the early assembly proteins it binds 23S rRNA. One of the proteins that surrounds the polypeptide exit tunnel on the outside of the ribosome. Forms the main docking site for trigger factor binding to the ribosome. This chain is Large ribosomal subunit protein uL23, found in Sulfurovum sp. (strain NBC37-1).